The sequence spans 136 residues: S-protein homolog 25 (136 aa).

The signal sequence occupies residues 1–20 (MNHSVFVILITITYFGLNQA). Residues Asn71 and Asn84 are each glycosylated (N-linked (GlcNAc...) asparagine).

The protein belongs to the plant self-incompatibility (S1) protein family.

It is found in the secreted. In Arabidopsis thaliana (Mouse-ear cress), this protein is S-protein homolog 25.